A 488-amino-acid chain; its full sequence is MLRFTNCSCKTFVKSSYKLNIRRMNSSFRTETDAFGEIHVPADKYWGAQTQRSFQNFKIGGARERMPLPLVHAFGVLKKSAAIVNESLGGLDPKISKAIQQAADEVASGKLDDHFPLVVFQTGSGTQSNMNANEVISNRAIEILGGKIGSKQVHPNNHCNQSQSSNDTFPTVMHIAASLQIQNELIPELTNLKNALEAKSKEFDHIVKIGRTHLQDATPLTLGQEFSGYVQQVENGIQRVAHSLKTLSFLAQGGTAVGTGLNTKPGFDVKIAEQISKETGLKFQTAPNKFEALAAHDAIVECSGALNTLACSLFKIAQDIRYLGSGPRCGYHELMLPENEPGSSIMPGKVNPTQNEALTQVCVQVMGNNAAITFAGSQGQFELNVFKPVMIANLLNSIRLITDAAYSFRVHCVEGIKANEPRIHELLTKSLMLVTALNPKIGYDAASKVAKNAHKKGITLKESALELGVLTEKEFDEWVVPEHMLGPK.

The N-terminal 24 residues, 1–24, are a transit peptide targeting the mitochondrion; the sequence is MLRFTNCSCKTFVKSSYKLNIRRM. Substrate is bound by residues 124-126, 154-157, 164-166, and Thr-212; these read SGT, HPNN, and SSN. The active-site Proton donor/acceptor is His-213. Ser-343 is a catalytic residue. Substrate-binding positions include Ser-344 and 349–351; that span reads KVN. Phosphothreonine is present on Thr-428.

It belongs to the class-II fumarase/aspartase family. Fumarase subfamily. As to quaternary structure, homotetramer.

The protein resides in the mitochondrion matrix. The protein localises to the cytoplasm. It is found in the nucleus. It catalyses the reaction (S)-malate = fumarate + H2O. Its pathway is carbohydrate metabolism; tricarboxylic acid cycle; (S)-malate from fumarate: step 1/1. Its function is as follows. Catalyzes the reversible stereospecific interconversion of fumarate to L-malate. In mitochondrion, catalyzes the hydration of fumarate to L-malate in the tricarboxylic acid (TCA) cycle to facilitate a transition step in the production of energy in the form of NADH. In cytoplasm and nucleus, involved in DNA repair in response to DNA damage: following DNA double-strand breaks (DSBs), translocates from the cytosol to the nucleus and promotes DNA repair by catalyzing the dehydration of L-malate to fumarate. In Saccharomyces cerevisiae (strain ATCC 204508 / S288c) (Baker's yeast), this protein is Fumarate hydratase, mitochondrial.